We begin with the raw amino-acid sequence, 323 residues long: 1-aminocyclopropane-1-carboxylate oxidase 4 (323 aa).

Residue Met1 is modified to N-acetylmethionine. The Fe2OG dioxygenase domain maps to Pro153 to Pro254. Residues His177, Asp179, and His234 each coordinate Fe cation. Residue Arg245 participates in 2-oxoglutarate binding.

It belongs to the iron/ascorbate-dependent oxidoreductase family. Fe cation is required as a cofactor. Expressed in vegetative tissues. Expressed constitutively at a low level in leaves and blades.

It catalyses the reaction 1-aminocyclopropane-1-carboxylate + L-ascorbate + O2 = ethene + L-dehydroascorbate + hydrogen cyanide + CO2 + 2 H2O. It functions in the pathway alkene biosynthesis; ethylene biosynthesis via S-adenosyl-L-methionine; ethylene from S-adenosyl-L-methionine: step 2/2. Functionally, enzyme involved in the ethylene biosynthesis. May promote stem elongation by maximizing the extensibility cells, possibly by activating ethylene biosynthesis, in response to very-long-chain fatty acids (VLCFAs C20:0 to C30:0). This is 1-aminocyclopropane-1-carboxylate oxidase 4 (ACO4) from Arabidopsis thaliana (Mouse-ear cress).